The primary structure comprises 122 residues: Large ribosomal subunit protein uL18 (122 aa).

Belongs to the universal ribosomal protein uL18 family. Part of the 50S ribosomal subunit; part of the 5S rRNA/L5/L18/L25 subcomplex. Contacts the 5S and 23S rRNAs.

This is one of the proteins that bind and probably mediate the attachment of the 5S RNA into the large ribosomal subunit, where it forms part of the central protuberance. In Geobacter sp. (strain M21), this protein is Large ribosomal subunit protein uL18.